Reading from the N-terminus, the 187-residue chain is Peptide deformylase (187 aa).

2 residues coordinate Fe cation: C107 and H149. E150 is a catalytic residue. Fe cation is bound at residue H153.

Belongs to the polypeptide deformylase family. It depends on Fe(2+) as a cofactor.

The catalysed reaction is N-terminal N-formyl-L-methionyl-[peptide] + H2O = N-terminal L-methionyl-[peptide] + formate. Removes the formyl group from the N-terminal Met of newly synthesized proteins. Requires at least a dipeptide for an efficient rate of reaction. N-terminal L-methionine is a prerequisite for activity but the enzyme has broad specificity at other positions. This is Peptide deformylase from Synechocystis sp. (strain ATCC 27184 / PCC 6803 / Kazusa).